Here is a 221-residue protein sequence, read N- to C-terminus: Thiamine-phosphate synthase (221 aa).

Residues 47 to 51 (QYREK) and asparagine 79 each bind 4-amino-2-methyl-5-(diphosphooxymethyl)pyrimidine. Aspartate 80 and aspartate 99 together coordinate Mg(2+). 4-amino-2-methyl-5-(diphosphooxymethyl)pyrimidine is bound at residue threonine 118. A 2-[(2R,5Z)-2-carboxy-4-methylthiazol-5(2H)-ylidene]ethyl phosphate-binding site is contributed by 144 to 146 (SFT). Lysine 147 is a binding site for 4-amino-2-methyl-5-(diphosphooxymethyl)pyrimidine. Residues glycine 175 and 195-196 (VT) each bind 2-[(2R,5Z)-2-carboxy-4-methylthiazol-5(2H)-ylidene]ethyl phosphate.

It belongs to the thiamine-phosphate synthase family. Mg(2+) is required as a cofactor.

The enzyme catalyses 2-[(2R,5Z)-2-carboxy-4-methylthiazol-5(2H)-ylidene]ethyl phosphate + 4-amino-2-methyl-5-(diphosphooxymethyl)pyrimidine + 2 H(+) = thiamine phosphate + CO2 + diphosphate. It carries out the reaction 2-(2-carboxy-4-methylthiazol-5-yl)ethyl phosphate + 4-amino-2-methyl-5-(diphosphooxymethyl)pyrimidine + 2 H(+) = thiamine phosphate + CO2 + diphosphate. It catalyses the reaction 4-methyl-5-(2-phosphooxyethyl)-thiazole + 4-amino-2-methyl-5-(diphosphooxymethyl)pyrimidine + H(+) = thiamine phosphate + diphosphate. Its pathway is cofactor biosynthesis; thiamine diphosphate biosynthesis; thiamine phosphate from 4-amino-2-methyl-5-diphosphomethylpyrimidine and 4-methyl-5-(2-phosphoethyl)-thiazole: step 1/1. In terms of biological role, condenses 4-methyl-5-(beta-hydroxyethyl)thiazole monophosphate (THZ-P) and 2-methyl-4-amino-5-hydroxymethyl pyrimidine pyrophosphate (HMP-PP) to form thiamine monophosphate (TMP). In Caldicellulosiruptor saccharolyticus (strain ATCC 43494 / DSM 8903 / Tp8T 6331), this protein is Thiamine-phosphate synthase.